The following is a 104-amino-acid chain: Phosphoribosyl-ATP pyrophosphatase (104 aa).

Belongs to the PRA-PH family.

It is found in the cytoplasm. The enzyme catalyses 1-(5-phospho-beta-D-ribosyl)-ATP + H2O = 1-(5-phospho-beta-D-ribosyl)-5'-AMP + diphosphate + H(+). The protein operates within amino-acid biosynthesis; L-histidine biosynthesis; L-histidine from 5-phospho-alpha-D-ribose 1-diphosphate: step 2/9. This is Phosphoribosyl-ATP pyrophosphatase from Methanocorpusculum labreanum (strain ATCC 43576 / DSM 4855 / Z).